Here is a 382-residue protein sequence, read N- to C-terminus: Beta-lactamase CMY-10 (382 aa).

The signal sequence occupies residues 1–23 (MQQRQSILWGAVATLMWAGLAHA). Residue serine 88 is the Acyl-ester intermediate of the active site. Serine 88 provides a ligand contact to AMP. Residues serine 88, glutamine 144, tyrosine 174, threonine 336, serine 338, and asparagine 363 each contribute to the GMP site. The IMP site is built by serine 88, glutamine 144, tyrosine 174, threonine 336, serine 338, and asparagine 363. Tyrosine 174 is an AMP binding site. Serine 338 serves as a coordination point for AMP.

This sequence belongs to the class-C beta-lactamase family. In terms of assembly, monomer.

It carries out the reaction a beta-lactam + H2O = a substituted beta-amino acid. Its activity is regulated as follows. Inhibited by various nucleotides in vitro, including adenosine 5'-(P-acetyl)monophosphate (acAMP), inosine-5'-monophosphate (IMP) and guanosine-5'-monophosphate (GMP); IMP and GMP exhibit strongest competitive inhibition. Inhibited by the beta-lactamase-blocking agent, avibactam. Inhibited by clavulanic acid. Weakly inhibited by citric acid. Class C beta-lactamase which confers resistance to penicillins and cephalosporins. Has benzylpenicillin-, ceftazidime-, nitrocefin- and imipenem-hydrolyzing activity. The protein is Beta-lactamase CMY-10 of Klebsiella aerogenes (Enterobacter aerogenes).